Here is a 689-residue protein sequence, read N- to C-terminus: MADNLVIVESPAKAKTIEKYLGKRYKVIASMGHVRDLPRSQMGVDTEDNYEPKYITIRGKGPVVKDLKKHAKKAKKIFLASDPDREGEAIAWHLSKILELEDSKENRVVFNEITKDAVKDSFKHPRGIEMDLVDAQQARRILDRLVGYNISPVLWKKVKKGLSAGRVQSVALRLVIDRENEIRNFKPEEYWSIEGEFRYKKSKFTAKFLHYKNKPYKLNNKDDVQRITEALNGDQFEITNVNRKEKTRYPAHPFTTSTLQQEAARKLNFKARKTMMLAQQLYEGIDLKRQGTVGLITYMRTDSTRISTSAKSEAQQYINDKYGEQYVSQRKSSGKQGDQDAHEAIRPTSTMRTPDDMKAFLTRDQHRLYKLIWERFVASQMAPAILDTVALDVTQNDIKFRANGQTIKFKGFMTLYVEAKDDKENDKENKLPQLDKGDKVTATKIEPAQHFTQPPPRYTEARLVKTLEELKIGRPSTYAPTIDTIQKRNYVKLESKRFIPTELGEIVYEQVKEYFPEIIDVEFTVNMETLLDKIAEGDMNWRKVIGDFYNSFKQDVERAESEMEKIEIKDEPAGEDCEVCGSPMVIKMGRYGKFMACSNFPDCRNTKAIVKTIGVTCPKCNEGDVVERKSKKNRIFYGCSRYPECDFISWDKPVGRDCPKCHHYLVNKKKGKSSQVVCSNCDYEEEVQK.

One can recognise a Toprim domain in the interval 3–113 (DNLVIVESPA…KENRVVFNEI (111 aa)). Mg(2+) is bound by residues Glu-9 and Asp-82. In terms of domain architecture, Topo IA-type catalytic spans 129–557 (EMDLVDAQQA…FYNSFKQDVE (429 aa)). An interaction with DNA region spans residues 163–168 (SAGRVQ). The active-site O-(5'-phospho-DNA)-tyrosine intermediate is the Tyr-298. 3 C4-type zinc fingers span residues 577-603 (CEVC…FPDC), 617-645 (CPKC…YPEC), and 658-681 (CPKC…CSNC).

This sequence belongs to the type IA topoisomerase family. In terms of assembly, monomer. Requires Mg(2+) as cofactor.

The enzyme catalyses ATP-independent breakage of single-stranded DNA, followed by passage and rejoining.. In terms of biological role, releases the supercoiling and torsional tension of DNA, which is introduced during the DNA replication and transcription, by transiently cleaving and rejoining one strand of the DNA duplex. Introduces a single-strand break via transesterification at a target site in duplex DNA. The scissile phosphodiester is attacked by the catalytic tyrosine of the enzyme, resulting in the formation of a DNA-(5'-phosphotyrosyl)-enzyme intermediate and the expulsion of a 3'-OH DNA strand. The free DNA strand then undergoes passage around the unbroken strand, thus removing DNA supercoils. Finally, in the religation step, the DNA 3'-OH attacks the covalent intermediate to expel the active-site tyrosine and restore the DNA phosphodiester backbone. In Staphylococcus epidermidis (strain ATCC 35984 / DSM 28319 / BCRC 17069 / CCUG 31568 / BM 3577 / RP62A), this protein is DNA topoisomerase 1.